A 275-amino-acid chain; its full sequence is Large ribosomal subunit protein uL2cz (275 aa).

2 disordered regions span residues 1 to 20 and 225 to 275; these read MAIH…AVDS and NPVD…RRSK.

This sequence belongs to the universal ribosomal protein uL2 family. In terms of assembly, part of the 50S ribosomal subunit.

The protein localises to the plastid. Its subcellular location is the chloroplast. The sequence is that of Large ribosomal subunit protein uL2cz (rpl2-A) from Populus alba (White poplar).